The primary structure comprises 194 residues: NADH-quinone oxidoreductase subunit B (194 aa).

Residues C73, C74, C138, and C168 each contribute to the [4Fe-4S] cluster site.

It belongs to the complex I 20 kDa subunit family. As to quaternary structure, NDH-1 is composed of 14 different subunits. Subunits NuoB, C, D, E, F, and G constitute the peripheral sector of the complex. [4Fe-4S] cluster serves as cofactor.

Its subcellular location is the cell inner membrane. The enzyme catalyses a quinone + NADH + 5 H(+)(in) = a quinol + NAD(+) + 4 H(+)(out). In terms of biological role, NDH-1 shuttles electrons from NADH, via FMN and iron-sulfur (Fe-S) centers, to quinones in the respiratory chain. The immediate electron acceptor for the enzyme in this species is believed to be ubiquinone. Couples the redox reaction to proton translocation (for every two electrons transferred, four hydrogen ions are translocated across the cytoplasmic membrane), and thus conserves the redox energy in a proton gradient. In Rhizobium leguminosarum bv. trifolii (strain WSM2304), this protein is NADH-quinone oxidoreductase subunit B.